We begin with the raw amino-acid sequence, 364 residues long: Dual-specificity RNA methyltransferase RlmN (364 aa).

Glu-91 acts as the Proton acceptor in catalysis. The Radical SAM core domain occupies 97–333; that stretch reads ESDRGTLCIS…VTVRKTRGDD (237 aa). Residues Cys-104 and Cys-338 are joined by a disulfide bond. [4Fe-4S] cluster-binding residues include Cys-111, Cys-115, and Cys-118. S-adenosyl-L-methionine-binding positions include 164 to 165, Ser-196, 218 to 220, and Asn-295; these read GE and SLH. The S-methylcysteine intermediate role is filled by Cys-338.

The protein belongs to the radical SAM superfamily. RlmN family. [4Fe-4S] cluster serves as cofactor.

The protein resides in the cytoplasm. The catalysed reaction is adenosine(2503) in 23S rRNA + 2 reduced [2Fe-2S]-[ferredoxin] + 2 S-adenosyl-L-methionine = 2-methyladenosine(2503) in 23S rRNA + 5'-deoxyadenosine + L-methionine + 2 oxidized [2Fe-2S]-[ferredoxin] + S-adenosyl-L-homocysteine. It carries out the reaction adenosine(37) in tRNA + 2 reduced [2Fe-2S]-[ferredoxin] + 2 S-adenosyl-L-methionine = 2-methyladenosine(37) in tRNA + 5'-deoxyadenosine + L-methionine + 2 oxidized [2Fe-2S]-[ferredoxin] + S-adenosyl-L-homocysteine. Specifically methylates position 2 of adenine 2503 in 23S rRNA and position 2 of adenine 37 in tRNAs. m2A2503 modification seems to play a crucial role in the proofreading step occurring at the peptidyl transferase center and thus would serve to optimize ribosomal fidelity. This chain is Dual-specificity RNA methyltransferase RlmN, found in Neisseria meningitidis serogroup C / serotype 2a (strain ATCC 700532 / DSM 15464 / FAM18).